We begin with the raw amino-acid sequence, 261 residues long: uncharacterized protein (261 aa).

An N-terminal signal peptide occupies residues 1–22 (MRDSKRVVLYISIIVLSIFIIG). A lipid anchor (N-palmitoyl cysteine) is attached at Cys-23. Cys-23 carries S-diacylglycerol cysteine lipidation.

Belongs to the staphylococcal tandem lipoprotein family.

The protein resides in the cell membrane. This is an uncharacterized protein from Staphylococcus aureus (strain Mu50 / ATCC 700699).